The sequence spans 327 residues: 2-methoxy-6-polyprenyl-1,4-benzoquinol methylase, mitochondrial (327 aa).

The transit peptide at 1 to 43 directs the protein to the mitochondrion; the sequence is MAAPIRAFVLRVLSDSTRNIHHVLRCRSKYLCRRAAITARRGY. S-adenosyl-L-methionine contacts are provided by residues T117, D171, and 199–200; that span reads DA.

The protein belongs to the class I-like SAM-binding methyltransferase superfamily. MenG/UbiE family. Component of a multi-subunit COQ enzyme complex, composed of at least coq3, coq4, coq5, coq6, coq7 and coq9.

It localises to the mitochondrion inner membrane. The catalysed reaction is a 2-methoxy-6-(all-trans-polyprenyl)benzene-1,4-diol + S-adenosyl-L-methionine = a 5-methoxy-2-methyl-3-(all-trans-polyprenyl)benzene-1,4-diol + S-adenosyl-L-homocysteine + H(+). The protein operates within cofactor biosynthesis; ubiquinone biosynthesis. Functionally, methyltransferase required for the conversion of 2-polyprenyl-6-methoxy-1,4-benzoquinol (DDMQH2) to 2-polyprenyl-3-methyl-6-methoxy-1,4-benzoquinol (DMQH2). The chain is 2-methoxy-6-polyprenyl-1,4-benzoquinol methylase, mitochondrial from Danio rerio (Zebrafish).